Here is a 632-residue protein sequence, read N- to C-terminus: Armadillo repeat-containing X-linked protein 2 (632 aa).

The Mitochondrial intermembrane portion of the chain corresponds to 1 to 6 (MSRVRD). Residues 1 to 6 (MSRVRD) are mitochondrion outer membrane (MOM)-targeting sequence. Residues 7–25 (AGCVAAGIVIGAGAWYCVY) traverse the membrane as a helical; Signal-anchor segment. The tract at residues 26 to 40 (KYTRGRDQTKKRMAK) is mitochondrion outer membrane (MOM)-targeting sequence. Topologically, residues 26-632 (KYTRGRDQTK…VKVIKLVNKF (607 aa)) are cytoplasmic. Disordered stretches follow at residues 68–124 (GFSP…AGVG), 160–304 (APKV…KVEV), and 335–369 (VPDS…RPVA). Composition is skewed to low complexity over residues 86–120 (EASA…EADG) and 211–241 (VASP…SPGT). Positions 336–356 (PDSEEGESGWTDTESDSDSEP) are enriched in acidic residues. 3 ARM repeats span residues 376-416 (PYEI…NNAN), 418-457 (SCNQ…NLSE), and 498-537 (ITND…NFAE).

This sequence belongs to the eutherian X-chromosome-specific Armcx family. In terms of tissue distribution, expressed at high levels ovary, heart, testis, prostate, brain, spleen and colon. Expressed at very low levels in liver and thymus. Not expressed in peripheral blood leukocytes. Not expressed in pancreas and ovarian carcinomas.

Its subcellular location is the mitochondrion. The protein resides in the mitochondrion outer membrane. May regulate the dynamics and distribution of mitochondria in neural cells. The sequence is that of Armadillo repeat-containing X-linked protein 2 (ARMCX2) from Homo sapiens (Human).